Reading from the N-terminus, the 561-residue chain is Bifunctional NAD(P)H-hydrate repair enzyme (561 aa).

The interval 1–241 is NAD(P)H-hydrate epimerase; that stretch reads MLSRISERCT…WMIAAERMDA (241 aa). One can recognise a YjeF N-terminal domain in the interval 29 to 235; that stretch reads LRDAEPAAAA…SLGLEEWMIA (207 aa). Positions 77-81 are NADPHX 1; for epimerase activity; that stretch reads NNGGD. K(+)-binding residues include Asn-78 and Asp-145. The tract at residues 149-155 is NADPHX 1; for epimerase activity; the sequence is GTGISGP. (6S)-NADPHX-binding residues include Tyr-160 and Asp-178. Ser-181 provides a ligand contact to K(+). A YjeF C-terminal domain is found at 249–548; the sequence is LGDVYGYFST…PRIPFIVNAS (300 aa). The tract at residues 249 to 561 is ADP-dependent (S)-NAD(P)H-hydrate dehydratase; the sequence is LGDVYGYFST…SATQQRPSGL (313 aa). Gly-351 contributes to the (6S)-NADPHX binding site. The interval 417–423 is NADPHX 2; for dehydratase activity; it reads HPGEAAR. ADP contacts are provided by residues 454–458 and 475–484; these read KGPGT and NAGMASGGMG. Residue Asp-485 coordinates (6S)-NADPHX.

In the N-terminal section; belongs to the NnrE/AIBP family. It in the C-terminal section; belongs to the NnrD/CARKD family. K(+) serves as cofactor.

It carries out the reaction (6S)-NADHX + ADP = AMP + phosphate + NADH + H(+). The enzyme catalyses (6S)-NADPHX + ADP = AMP + phosphate + NADPH + H(+). It catalyses the reaction (6R)-NADHX = (6S)-NADHX. The catalysed reaction is (6R)-NADPHX = (6S)-NADPHX. In terms of biological role, bifunctional enzyme that catalyzes the epimerization of the S- and R-forms of NAD(P)HX and the dehydration of the S-form of NAD(P)HX at the expense of ADP, which is converted to AMP. This allows the repair of both epimers of NAD(P)HX, a damaged form of NAD(P)H that is a result of enzymatic or heat-dependent hydration. The protein is Bifunctional NAD(P)H-hydrate repair enzyme of Leishmania braziliensis.